The following is a 528-amino-acid chain: Tyrosine--tRNA ligase, cytoplasmic (528 aa).

Position 1 is an N-acetylmethionine (M1). N-acetylglycine; in Tyrosine--tRNA ligase, cytoplasmic, N-terminally processed is present on G2. Y39 contacts L-tyrosine. Y39 serves as a coordination point for trans-resveratrol. The 'HIGH' region signature appears at 44–52 (TTGKPHVAY). The L-tyrosine site is built by Y166, Q170, D173, and Q188. Q170 and D173 together coordinate trans-resveratrol. K197 is modified (N6-acetyllysine). The residue at position 205 (S205) is a Phosphoserine. At K206 the chain carries N6-acetyllysine. The 'KMSKS' region motif lies at 222–226 (KMSSS). Residues 242 to 247 (KKKLKK) carry the Nuclear localization signal motif. The interval 339–363 (AAYPDPSKQKPTAKGPAKSSEPEEI) is disordered. Residues 364 to 468 (IPSRLDIRVG…AGSAPGERVF (105 aa)) form the tRNA-binding domain. Position 386 is a phosphoserine (S386). N6-acetyllysine is present on residues K474, K482, and K490.

The protein belongs to the class-I aminoacyl-tRNA synthetase family. As to quaternary structure, homodimer. Interacts (when binding to resveratrol) with PARP1; interaction stimulates the poly-ADP-ribosyltransferase activity of PARP1.

It localises to the cytoplasm. The protein resides in the nucleus. It carries out the reaction tRNA(Tyr) + L-tyrosine + ATP = L-tyrosyl-tRNA(Tyr) + AMP + diphosphate + H(+). Resveratrol strongly inhibits the tyrosine--tRNA ligase activity. Tyrosine--tRNA ligase that catalyzes the attachment of tyrosine to tRNA(Tyr) in a two-step reaction: tyrosine is first activated by ATP to form Tyr-AMP and then transferred to the acceptor end of tRNA(Tyr). Also acts as a positive regulator of poly-ADP-ribosylation in the nucleus, independently of its tyrosine--tRNA ligase activity. Activity is switched upon resveratrol-binding: resveratrol strongly inhibits the tyrosine--tRNA ligase activity and promotes relocalization to the nucleus, where YARS1 specifically stimulates the poly-ADP-ribosyltransferase activity of PARP1. This is Tyrosine--tRNA ligase, cytoplasmic (Yars1) from Rattus norvegicus (Rat).